We begin with the raw amino-acid sequence, 198 residues long: Basic helix-loop-helix transcription factor amos (198 aa).

Residues 76 to 131 form a disordered region; the sequence is EQQQHHLQANPLGKNQGRSPRYWNKQQRSKPYDKLSTSMSSSTSSASSSSSSSAGF. The span at 111-129 shows a compositional bias: low complexity; sequence STSMSSSTSSASSSSSSSA. The bHLH domain occupies 138 to 190; sequence KRRLAANARERRRMNSLNDAFDKLRDVVPSLGHDRRLSKYETLQMAQAYIGDL.

As to quaternary structure, efficient DNA binding requires dimerization with another bHLH protein. Interacts with Daughterless (da). As to expression, during embryonic development, expression is seen in a small cluster of ectodermal cells during stage 10 which becomes restricted to 1 cell by stage 11. Expression is lost from this cell in the thorax and then the abdomen. Later expression is restricted to sensory organ precursors. Very transient expression was detected in distal leg disks at approximately 0-4 hours after puparium formation (APF), correlating with the anlage of the innervated tarsal claw.

It localises to the nucleus. Its function is as follows. Transcription factor involved in early neurogenesis; sensillum basiconica formation and maybe sensillum trichodea development. Promotes multiple dendritic (MD) neuron formation. Required for olfactory sensilla; regulated by lozenge (lz). The protein is Basic helix-loop-helix transcription factor amos (amos) of Drosophila melanogaster (Fruit fly).